The primary structure comprises 282 residues: Aquaporin NIP1-1 (282 aa).

Helical transmembrane passes span isoleucine 46 to isoleucine 66 and isoleucine 74 to valine 94. Positions asparagine 103–alanine 105 match the NPA 1 motif. A run of 3 helical transmembrane segments spans residues valine 125 to glycine 145, serine 162 to threonine 182, and alanine 186 to alanine 206. Positions asparagine 215 to alanine 217 match the NPA 2 motif. The helical transmembrane segment at isoleucine 232–leucine 252 threads the bilayer.

This sequence belongs to the MIP/aquaporin (TC 1.A.8) family. NIP (TC 1.A.8.12) subfamily.

It is found in the membrane. Functionally, aquaporins facilitate the transport of water and small neutral solutes across cell membranes. This chain is Aquaporin NIP1-1 (NIP1-1), found in Zea mays (Maize).